A 339-amino-acid chain; its full sequence is GDP-fucose transporter 1 (339 aa).

8 helical membrane-spanning segments follow: residues 9–29, 45–65, 82–102, 111–133, 136–156, 165–185, 209–229, and 237–257; these read SVRI…LVFL, LFVT…LSLL, LSVA…ITFN, VSFY…YVIL, STSY…LMGV, ISYS…LNAI, ACFL…VAHF, and FWLM…ITGL. Residues 319–339 form a disordered region; sequence AHTIQASKDDKALQEDGQTKV. Residues 325-339 are compositionally biased toward basic and acidic residues; the sequence is SKDDKALQEDGQTKV.

Belongs to the TPT transporter family. SLC35C subfamily.

The protein localises to the golgi apparatus membrane. It carries out the reaction GMP(out) + GDP-beta-L-fucose(in) = GMP(in) + GDP-beta-L-fucose(out). Its function is as follows. Antiporter specific for GDP-l-fucose and depending on the concomitant reverse transport of GMP. Involved in GDP-fucose import from the cytoplasm into the Golgi lumen. This chain is GDP-fucose transporter 1 (slc35c1), found in Nematostella vectensis (Starlet sea anemone).